The following is a 561-amino-acid chain: Arf-GAP domain and FG repeat-containing protein 1 (561 aa).

In terms of domain architecture, Arf-GAP spans 11–135; the sequence is EKHLKMLRDM…WYVPPEQAKV (125 aa). The segment at 29–52 adopts a C4-type zinc-finger fold; it reads CFDCDQRGPTYVNMTVGSFVCTSC. At serine 167 the chain carries Phosphoserine. Residues 170–193 form a disordered region; it reads ALHLNKGTPSQSPVVGRSQGQQQE. Over residues 176–191 the composition is skewed to polar residues; the sequence is GTPSQSPVVGRSQGQQ. At threonine 177 the chain carries Phosphothreonine. 2 positions are modified to phosphoserine: serine 181 and serine 362. Serine 367 carries O-linked (GlcNAc) serine glycosylation. Residues 413 to 433 form a disordered region; sequence SAQTQPASSGPAPFGATPSTN.

As to quaternary structure, interacts with FCHO1. Interacts with EPS15R and EPS15. In terms of processing, O-glycosylated. In terms of tissue distribution, expressed in the testes (at protein level).

It is found in the nucleus. The protein localises to the cytoplasmic vesicle. In terms of biological role, required for vesicle docking or fusion during acrosome biogenesis. May play a role in RNA trafficking or localization. The chain is Arf-GAP domain and FG repeat-containing protein 1 (Agfg1) from Mus musculus (Mouse).